The primary structure comprises 435 residues: Putative F-box/kelch-repeat protein At1g20790 (435 aa).

An F-box domain is found at Met1–Ile49. Kelch repeat units lie at residues Pro192 to Asp238 and Leu280 to Pro335.

This is Putative F-box/kelch-repeat protein At1g20790 from Arabidopsis thaliana (Mouse-ear cress).